Consider the following 367-residue polypeptide: tRNA-specific 2-thiouridylase MnmA (367 aa).

ATP-binding positions include 12–19 (GMSGGVDS) and M38. An interaction with target base in tRNA region spans residues 98-100 (NPD). Residue C103 is the Nucleophile of the active site. Residues C103 and C200 are joined by a disulfide bond. G128 contacts ATP. The interval 150–152 (KDQ) is interaction with tRNA. C200 acts as the Cysteine persulfide intermediate in catalysis. Residues 312–313 (RY) form an interaction with tRNA region.

This sequence belongs to the MnmA/TRMU family.

It localises to the cytoplasm. The enzyme catalyses S-sulfanyl-L-cysteinyl-[protein] + uridine(34) in tRNA + AH2 + ATP = 2-thiouridine(34) in tRNA + L-cysteinyl-[protein] + A + AMP + diphosphate + H(+). Catalyzes the 2-thiolation of uridine at the wobble position (U34) of tRNA, leading to the formation of s(2)U34. This chain is tRNA-specific 2-thiouridylase MnmA, found in Psychromonas ingrahamii (strain DSM 17664 / CCUG 51855 / 37).